Consider the following 448-residue polypeptide: Signal recognition particle 54 kDa protein (448 aa).

GTP contacts are provided by residues 107-114 (GIQGSGKT), 189-193 (DTAGR), and 247-250 (TKLD).

The protein belongs to the GTP-binding SRP family. SRP54 subfamily. In terms of assembly, part of the signal recognition particle protein translocation system, which is composed of SRP and FtsY. Archaeal SRP consists of a 7S RNA molecule of 300 nucleotides and two protein subunits: SRP54 and SRP19.

The protein localises to the cytoplasm. It catalyses the reaction GTP + H2O = GDP + phosphate + H(+). Functionally, involved in targeting and insertion of nascent membrane proteins into the cytoplasmic membrane. Binds to the hydrophobic signal sequence of the ribosome-nascent chain (RNC) as it emerges from the ribosomes. The SRP-RNC complex is then targeted to the cytoplasmic membrane where it interacts with the SRP receptor FtsY. The polypeptide is Signal recognition particle 54 kDa protein (Thermococcus gammatolerans (strain DSM 15229 / JCM 11827 / EJ3)).